The chain runs to 741 residues: Aspartyl/asparaginyl beta-hydroxylase (741 aa).

The segment at 1–54 (MAPRKNAKGGGGNSSSSGSGSGSGSGSPSTGSSGSSSSPGARREAKHGGHKNGR) is disordered. Topologically, residues 1–62 (MAPRKNAKGG…GRRGGISGGS (62 aa)) are cytoplasmic. The span at 8-25 (KGGGGNSSSSGSGSGSGS) shows a compositional bias: gly residues. Serine 15 carries the phosphoserine modification. Positions 26–40 (GSPSTGSSGSSSSPG) are enriched in low complexity. The chain crosses the membrane as a helical; Signal-anchor for type II membrane protein span at residues 63 to 83 (FFTWFMVIALLGVWTSVAVVW). The Lumenal segment spans residues 84 to 741 (FDLVDYEEVL…PQQRRSLPAI (658 aa)). Residues aspartate 100, aspartate 102, aspartate 104, aspartate 106, and aspartate 111 each contribute to the Ca(2+) site. 2 disordered regions span residues 120–141 (ERSP…AELE) and 222–244 (TASQ…SDPS). Positions 231–242 (MEEMTNEQENSD) are enriched in acidic residues. TPR repeat units follow at residues 324 to 357 (IKAE…YPQS), 365 to 398 (AQCE…PDAP), 437 to 470 (TTLK…TPND), 472 to 504 (FAKV…GDPG), and 508 to 540 (GRFY…GHFA). Asparagine 453 is a glycosylation site (N-linked (GlcNAc...) asparagine). Tryptophan 608 provides a ligand contact to 2-oxoglutarate. Cysteine 624 and cysteine 631 are joined by a disulfide. Serine 651 lines the 2-oxoglutarate pocket. Histidine 662 is a binding site for Fe cation. Position 671–673 (671–673 (RMH)) interacts with 2-oxoglutarate. A glycan (N-linked (GlcNAc...) asparagine) is linked at asparagine 689. Histidine 708 lines the Fe cation pocket. Arginine 718 contributes to the 2-oxoglutarate binding site.

The protein belongs to the aspartyl/asparaginyl beta-hydroxylase family. Monomer. Isoform 2 interacts with CASQ2. It depends on Fe cation as a cofactor. In terms of tissue distribution, isoform 1 is detected in heart, liver and ovary (at protein level). Detected in heart ventricle. Isoform 1 is widely expressed. Isoform 2 is detected in heart and skeletal muscle.

Its subcellular location is the endoplasmic reticulum membrane. The protein resides in the sarcoplasmic reticulum membrane. The catalysed reaction is L-aspartyl-[protein] + 2-oxoglutarate + O2 = 3-hydroxy-L-aspartyl-[protein] + succinate + CO2. Functionally, specifically hydroxylates an Asp or Asn residue in certain epidermal growth factor-like (EGF) domains of a number of proteins. This Mus musculus (Mouse) protein is Aspartyl/asparaginyl beta-hydroxylase (Asph).